A 501-amino-acid chain; its full sequence is Maturase K (501 aa).

It belongs to the intron maturase 2 family. MatK subfamily.

The protein localises to the plastid. It localises to the chloroplast. In terms of biological role, usually encoded in the trnK tRNA gene intron. Probably assists in splicing its own and other chloroplast group II introns. This Amborella trichopoda protein is Maturase K.